Reading from the N-terminus, the 228-residue chain is UPF0758 protein Reut_A2732 (228 aa).

The MPN domain occupies 102–224; the sequence is GLDSPAAVRS…VHSFAEHGEL (123 aa). Histidine 173, histidine 175, and aspartate 186 together coordinate Zn(2+). Residues 173 to 186 carry the JAMM motif motif; it reads HNHPSGCCTPSQSD.

Belongs to the UPF0758 family.

This Cupriavidus pinatubonensis (strain JMP 134 / LMG 1197) (Cupriavidus necator (strain JMP 134)) protein is UPF0758 protein Reut_A2732.